Consider the following 126-residue polypeptide: Ribosome-binding factor A (126 aa).

Belongs to the RbfA family. As to quaternary structure, monomer. Binds 30S ribosomal subunits, but not 50S ribosomal subunits or 70S ribosomes.

The protein localises to the cytoplasm. Its function is as follows. One of several proteins that assist in the late maturation steps of the functional core of the 30S ribosomal subunit. Associates with free 30S ribosomal subunits (but not with 30S subunits that are part of 70S ribosomes or polysomes). Required for efficient processing of 16S rRNA. May interact with the 5'-terminal helix region of 16S rRNA. This is Ribosome-binding factor A from Haemophilus ducreyi (strain 35000HP / ATCC 700724).